We begin with the raw amino-acid sequence, 100 residues long: MNLSPREKDKLLVAMAAVVARRRLERGVKLNYPEAVALITDFVVEGARDGHSVADLMERGGAVIGREQVMEGVAEMIDEIQVEATFTDGTKLVTVHEPIR.

Belongs to the urease gamma subunit family. Heterotrimer of UreA (gamma), UreB (beta) and UreC (alpha) subunits. Three heterotrimers associate to form the active enzyme.

The protein resides in the cytoplasm. The enzyme catalyses urea + 2 H2O + H(+) = hydrogencarbonate + 2 NH4(+). Its pathway is nitrogen metabolism; urea degradation; CO(2) and NH(3) from urea (urease route): step 1/1. In Methylocella silvestris (strain DSM 15510 / CIP 108128 / LMG 27833 / NCIMB 13906 / BL2), this protein is Urease subunit gamma.